The primary structure comprises 291 residues: Oligopeptide transport system permease protein OppC (291 aa).

Transmembrane regions (helical) follow at residues 22 to 42 (VASL…PPLL), 85 to 105 (MLIG…VGAI), 116 to 136 (TLMW…IAIV), 142 to 162 (NSAN…MISS), 209 to 229 (ALNV…GFGI), and 247 to 267 (ATAF…ILVC). Residues 81 to 272 (MQKSMLIGVC…LILVCANLTG (192 aa)) enclose the ABC transmembrane type-1 domain.

It belongs to the binding-protein-dependent transport system permease family. OppBC subfamily. The complex is composed of an ATP-binding protein (OppD), two transmembrane proteins (OppB and OppC) and a solute-binding protein (OppA).

The protein localises to the cell inner membrane. Functionally, part of the ABC transporter complex OppABCD involved in the uptake of oligopeptides. Responsible for the translocation of the substrate across the membrane. This chain is Oligopeptide transport system permease protein OppC, found in Mycobacterium bovis (strain ATCC BAA-935 / AF2122/97).